The following is a 715-amino-acid chain: Methylmalonyl-CoA mutase large subunit (715 aa).

(R)-methylmalonyl-CoA contacts are provided by Y70, M73, R77, T80, R82, Y84, and S109. The cob(II)alamin site is built by F112 and A134. The (R)-methylmalonyl-CoA site is built by T190 and Q192. Cob(II)alamin is bound by residues V201 and R202. (R)-methylmalonyl-CoA-binding residues include R202, H239, R278, and S280. Cob(II)alamin contacts are provided by G328, E365, A368, G599, H600, D601, R602, S645, L647, G676, and T699. Residues 587–715 form the B12-binding domain; it reads QPRIMIAKMG…AKVLEILLEE (129 aa).

The protein belongs to the methylmalonyl-CoA mutase family. In terms of assembly, heterodimer of an alpha and a beta chain. It depends on adenosylcob(III)alamin as a cofactor.

It catalyses the reaction (R)-methylmalonyl-CoA = succinyl-CoA. Catalyzes the isomerization of succinyl-CoA to methylmalonyl-CoA during synthesis of propionate from tricarboxylic acid-cycle intermediates. The chain is Methylmalonyl-CoA mutase large subunit (mutB) from Porphyromonas gingivalis (strain ATCC BAA-308 / W83).